The primary structure comprises 522 residues: Probable protein kinase UbiB (522 aa).

The 379-residue stretch at 119–497 (SFERVPVASA…QRRTNRLLQS (379 aa)) folds into the Protein kinase domain. ATP-binding positions include 125-133 (VASASIAQV) and lysine 151. Catalysis depends on aspartate 286, which acts as the Proton acceptor. Residues 496-516 (QSIIYGGMGFVLGLLALQFLI) form a helical membrane-spanning segment.

Belongs to the ABC1 family. UbiB subfamily.

It localises to the cell inner membrane. The protein operates within cofactor biosynthesis; ubiquinone biosynthesis [regulation]. Functionally, is probably a protein kinase regulator of UbiI activity which is involved in aerobic coenzyme Q (ubiquinone) biosynthesis. This is Probable protein kinase UbiB from Paracidovorax citrulli (strain AAC00-1) (Acidovorax citrulli).